Consider the following 238-residue polypeptide: Major prion protein (238 aa).

The N-terminal stretch at 1 to 15 (MLVLFVATWSDLGLC) is a signal peptide. The interval 16 to 215 (KKRPKPGGWN…ESQAYYQRGS (200 aa)) is interaction with GRB2, ERI3 and SYN1. A disordered region spans residues 18-93 (RPKPGGWNTG…WHKPSKPKTS (76 aa)). Tandem repeats lie at residues 44-52 (PQGGGGWGQ), 53-60 (PHGGGWGQ), 61-68 (PHGGGWGQ), and 69-76 (PHGGGWGQ). The 4 X 8 AA tandem repeats of P-H-G-G-G-W-G-Q stretch occupies residues 44–83 (PQGGGGWGQPHGGGWGQPHGGGWGQPHGGGWGQGGGTHNQ). The segment covering 45–80 (QGGGGWGQPHGGGWGQPHGGGWGQPHGGGWGQGGGT) has biased composition (gly residues). Gly-47, Gly-48, His-54, Gly-55, Gly-56, His-62, Gly-63, Gly-64, His-70, Gly-71, and Gly-72 together coordinate Cu(2+). Residues 83–93 (QWHKPSKPKTS) show a composition bias toward basic residues. An intrachain disulfide couples Cys-164 to Cys-199. 2 N-linked (GlcNAc...) asparagine glycosylation sites follow: Asn-166 and Asn-182. A lipid anchor (GPI-anchor amidated serine) is attached at Ser-215. Residues 216–238 (SIVLFSSPPVILLISFLIFLIVG) constitute a propeptide, removed in mature form.

Belongs to the prion family. In terms of assembly, monomer and homodimer. Has a tendency to aggregate into amyloid fibrils containing a cross-beta spine, formed by a steric zipper of superposed beta-strands. Soluble oligomers may represent an intermediate stage on the path to fibril formation. Copper binding may promote oligomerization. Interacts with GRB2, APP, ERI3/PRNPIP and SYN1. Mislocalized cytosolically exposed PrP interacts with MGRN1; this interaction alters MGRN1 subcellular location and causes lysosomal enlargement. Interacts with KIAA1191.

Its subcellular location is the cell membrane. It localises to the golgi apparatus. In terms of biological role, its primary physiological function is unclear. Has cytoprotective activity against internal or environmental stresses. May play a role in neuronal development and synaptic plasticity. May be required for neuronal myelin sheath maintenance. May play a role in iron uptake and iron homeostasis. Soluble oligomers are toxic to cultured neuroblastoma cells and induce apoptosis (in vitro). Association with GPC1 (via its heparan sulfate chains) targets PRNP to lipid rafts. Also provides Cu(2+) or Zn(2+) for the ascorbate-mediated GPC1 deaminase degradation of its heparan sulfate side chains. This is Major prion protein (PRNP) from Theropithecus gelada (Gelada baboon).